Here is a 668-residue protein sequence, read N- to C-terminus: Echinocandin B biosynthetic cluster protein J (668 aa).

5 disordered regions span residues 1 to 20, 92 to 113, 224 to 322, 330 to 349, and 483 to 506; these read MHFAESVQTPPPSRPSDQSL, YTPPSLDSRSSATPPQNLPPTP, PLDH…QSAD, EVAEPAPPSPSTRWTHSIPT, and NCSSSSCSSSASKKNEEKREPPLK. Polar residues predominate over residues 96 to 106; that stretch reads SLDSRSSATPP. Over residues 264–275 the composition is skewed to pro residues; that stretch reads NPEPGTPTPPSP. Residues 311-322 show a composition bias toward polar residues; that stretch reads YRSTPSPCQSAD. Low complexity predominate over residues 484-494; sequence CSSSSCSSSAS. Basic and acidic residues predominate over residues 495 to 505; that stretch reads KKNEEKREPPL.

The protein operates within antifungal biosynthesis. In terms of biological role, part of the gene cluster that mediates the biosynthesis of echinocandin B, a fungal lipidated cyclic hexapeptide that acts as an antifungal agent. Linoleoyl-AMP, produced by the fatty-acyl-AMP ligase ecdI, is transferred to the initiation carrier domain (T0) of ecdA. The linoleoyl-S-phosphopantetheinyl-T0 is sequentially extended with L-ornithine, L-threonine, L-proline, L-homotyrosine, L-threonine, and 4R-methyl-L-proline to form the linear hexapeptide. Thereafter, the terminal condensation (C7) performs macrocyclization of the NRPS product and the cyclic scaffold is released from ecdA. All six of the amino acid residues are hydroxylated, including 4R,5R-dihydroxy-L-ornithine, 4R-hydroxyl-L-proline, 3S,4S-dihydroxy-L-homotyrosine, and 3S-hydroxyl-4S-methyl-L-prolin. In the pathway, all the hydroxylation reactions are proposed to occur following completion of the cyclic peptide, so the unhydroxylated precursor produced by ecdA will undergo six rounds of hydroxylation. Five hydroxylase genes (ecdG, ecdH, ecdK, htyE and htyF) are embedded within the echinocandin B (ecd) and L-homotyrosine (hty) clusters. This chain is Echinocandin B biosynthetic cluster protein J, found in Aspergillus rugulosus (Emericella rugulosa).